The primary structure comprises 252 residues: MITKRIIPCLDVKEGRVVKGIQFLGLKDAGDPVELAEAYDRESADELVFLDISASHEGRKTMTDVVEQVAAKLAIPFTVGGGINQLSDMKRMLRAGADKVSVNTAAVLRPELITEGADFFGSQCIVAAIDAKYDEDSDCYKVYTHGGRQKTEWEVTAWAKEAVSRGAGEILLTSMDADGEKTGFNHTLTQLVTRAVPVPVIASGGAGSARHMLEAFTIGEADAALAASIFHYKETSIKEVKDYMKKHGVNVR.

Active-site residues include aspartate 11 and aspartate 130.

The protein belongs to the HisA/HisF family. In terms of assembly, heterodimer of HisH and HisF.

The protein localises to the cytoplasm. The catalysed reaction is 5-[(5-phospho-1-deoxy-D-ribulos-1-ylimino)methylamino]-1-(5-phospho-beta-D-ribosyl)imidazole-4-carboxamide + L-glutamine = D-erythro-1-(imidazol-4-yl)glycerol 3-phosphate + 5-amino-1-(5-phospho-beta-D-ribosyl)imidazole-4-carboxamide + L-glutamate + H(+). It functions in the pathway amino-acid biosynthesis; L-histidine biosynthesis; L-histidine from 5-phospho-alpha-D-ribose 1-diphosphate: step 5/9. In terms of biological role, IGPS catalyzes the conversion of PRFAR and glutamine to IGP, AICAR and glutamate. The HisF subunit catalyzes the cyclization activity that produces IGP and AICAR from PRFAR using the ammonia provided by the HisH subunit. In Bacillus velezensis (strain DSM 23117 / BGSC 10A6 / LMG 26770 / FZB42) (Bacillus amyloliquefaciens subsp. plantarum), this protein is Imidazole glycerol phosphate synthase subunit HisF.